Reading from the N-terminus, the 201-residue chain is Adenylyl-sulfate kinase (201 aa).

35-42 contacts ATP; the sequence is GLSGSGKS. Ser-109 serves as the catalytic Phosphoserine intermediate.

The protein belongs to the APS kinase family.

The catalysed reaction is adenosine 5'-phosphosulfate + ATP = 3'-phosphoadenylyl sulfate + ADP + H(+). It functions in the pathway sulfur metabolism; hydrogen sulfide biosynthesis; sulfite from sulfate: step 2/3. Catalyzes the synthesis of activated sulfate. The sequence is that of Adenylyl-sulfate kinase from Citrobacter koseri (strain ATCC BAA-895 / CDC 4225-83 / SGSC4696).